Consider the following 68-residue polypeptide: Copper transport protein ATOX1 (68 aa).

Residues 1-63 (MPKHEFSVDM…TLKKTGKTVS (63 aa)) enclose the HMA domain. The Cu cation site is built by cysteine 12 and cysteine 15. Phosphoserine is present on serine 47. Lysine 60 bears the N6-acetyllysine mark.

This sequence belongs to the ATX1 family. As to quaternary structure, homodimer. Interacts with ATP7B. Interacts with ATP7A. Interacts (via dimer form) with SLC31A1 (via C-terminal domain); this interaction improves ATOX1 stability and controls intracellular Cu(I) levels. In terms of tissue distribution, ubiquitous.

Its function is as follows. Binds and deliver cytosolic copper to the copper ATPase proteins. May be important in cellular antioxidant defense. This is Copper transport protein ATOX1 from Homo sapiens (Human).